Here is a 122-residue protein sequence, read N- to C-terminus: Small ribosomal subunit protein uS12c (122 aa).

This sequence belongs to the universal ribosomal protein uS12 family. As to quaternary structure, part of the 30S ribosomal subunit.

The protein localises to the plastid. The protein resides in the chloroplast. With S4 and S5 plays an important role in translational accuracy. Located at the interface of the 30S and 50S subunits. This is Small ribosomal subunit protein uS12c (rps12) from Mesostigma viride (Green alga).